Here is a 103-residue protein sequence, read N- to C-terminus: Large ribosomal subunit protein bL21 (103 aa).

It belongs to the bacterial ribosomal protein bL21 family. Part of the 50S ribosomal subunit. Contacts protein L20.

In terms of biological role, this protein binds to 23S rRNA in the presence of protein L20. This Bordetella petrii (strain ATCC BAA-461 / DSM 12804 / CCUG 43448) protein is Large ribosomal subunit protein bL21.